Consider the following 506-residue polypeptide: Histidine ammonia-lyase (506 aa).

The 5-imidazolinone (Ala-Gly) cross-link spans 144-146; the sequence is ASG. Ser145 is modified (2,3-didehydroalanine (Ser)).

Belongs to the PAL/histidase family. Contains an active site 4-methylidene-imidazol-5-one (MIO), which is formed autocatalytically by cyclization and dehydration of residues Ala-Ser-Gly.

It is found in the cytoplasm. It catalyses the reaction L-histidine = trans-urocanate + NH4(+). It functions in the pathway amino-acid degradation; L-histidine degradation into L-glutamate; N-formimidoyl-L-glutamate from L-histidine: step 1/3. This is Histidine ammonia-lyase from Legionella pneumophila subsp. pneumophila (strain Philadelphia 1 / ATCC 33152 / DSM 7513).